A 267-amino-acid chain; its full sequence is 3-methyl-2-oxobutanoate hydroxymethyltransferase (267 aa).

Mg(2+) is bound by residues D45 and D84. Residues 45 to 46 (DS), D84, and K113 contribute to the 3-methyl-2-oxobutanoate site. E115 contacts Mg(2+). E182 serves as the catalytic Proton acceptor.

The protein belongs to the PanB family. As to quaternary structure, homodecamer; pentamer of dimers. The cofactor is Mg(2+).

It localises to the cytoplasm. The enzyme catalyses 3-methyl-2-oxobutanoate + (6R)-5,10-methylene-5,6,7,8-tetrahydrofolate + H2O = 2-dehydropantoate + (6S)-5,6,7,8-tetrahydrofolate. It functions in the pathway cofactor biosynthesis; coenzyme A biosynthesis. In terms of biological role, catalyzes the reversible reaction in which hydroxymethyl group from 5,10-methylenetetrahydrofolate is transferred onto alpha-ketoisovalerate to form ketopantoate. In Sulfurisphaera tokodaii (strain DSM 16993 / JCM 10545 / NBRC 100140 / 7) (Sulfolobus tokodaii), this protein is 3-methyl-2-oxobutanoate hydroxymethyltransferase.